The primary structure comprises 192 residues: Archaemetzincin (192 aa).

His-137 contacts Zn(2+). Catalysis depends on Glu-138, which acts as the Proton acceptor. His-141, His-147, Cys-148, Cys-153, Cys-172, and Cys-175 together coordinate Zn(2+).

This sequence belongs to the peptidase M54 family. Monomer. It depends on Zn(2+) as a cofactor.

Functionally, probable zinc metalloprotease whose natural substrate is unknown. The protein is Archaemetzincin of Pyrococcus furiosus (strain ATCC 43587 / DSM 3638 / JCM 8422 / Vc1).